We begin with the raw amino-acid sequence, 176 residues long: Large ribosomal subunit protein eL20 (176 aa).

This sequence belongs to the eukaryotic ribosomal protein eL20 family. As to quaternary structure, component of the large ribosomal subunit.

It is found in the cytoplasm. Its function is as follows. Component of the large ribosomal subunit. The ribosome is a large ribonucleoprotein complex responsible for the synthesis of proteins in the cell. The sequence is that of Large ribosomal subunit protein eL20 (rpl18a) from Salmo salar (Atlantic salmon).